The following is a 92-amino-acid chain: Small ribosomal subunit protein uS19c (92 aa).

The protein belongs to the universal ribosomal protein uS19 family.

Its subcellular location is the plastid. The protein resides in the chloroplast. Protein S19 forms a complex with S13 that binds strongly to the 16S ribosomal RNA. This chain is Small ribosomal subunit protein uS19c (rps19), found in Chlorella vulgaris (Green alga).